The chain runs to 248 residues: ATP synthase delta chain, chloroplastic (248 aa).

A chloroplast-targeting transit peptide spans 1–60; that stretch reads MAALQQTPITFQSRSPPPTQIISGPTAKLSFSGGLKLPKLTIKLRSNRTSRRGGGAAGSK.

It belongs to the ATPase delta chain family. In terms of assembly, F-type ATPases have 2 components, CF(1) - the catalytic core - and CF(0) - the membrane proton channel. CF(1) has five subunits: alpha(3), beta(3), gamma(1), delta(1), epsilon(1). CF(0) has three main subunits: a, b and c.

Its subcellular location is the plastid. The protein resides in the chloroplast thylakoid membrane. In terms of biological role, this protein seems to be part of the stalk that links CF(0) to CF(1). It either transmits conformational changes from CF(0) into CF(1) or is implicated in proton conduction. The protein is ATP synthase delta chain, chloroplastic (ATPD) of Nicotiana tabacum (Common tobacco).